The chain runs to 310 residues: ADP-L-glycero-D-manno-heptose-6-epimerase (310 aa).

NADP(+) is bound by residues 10–11, 31–32, K38, K53, 75–79, and N92; these read FI, DN, and EGACS. Y140 (proton acceptor) is an active-site residue. K144 is an NADP(+) binding site. N169 serves as a coordination point for substrate. NADP(+) contacts are provided by V170 and K178. The active-site Proton acceptor is K178. Substrate-binding positions include S180, H187, 201-204, and R209; that span reads FEGS. K267 carries the post-translational modification N6-acetyllysine. Y272 lines the substrate pocket.

The protein belongs to the NAD(P)-dependent epimerase/dehydratase family. HldD subfamily. In terms of assembly, homopentamer. NADP(+) serves as cofactor.

The catalysed reaction is ADP-D-glycero-beta-D-manno-heptose = ADP-L-glycero-beta-D-manno-heptose. Its pathway is nucleotide-sugar biosynthesis; ADP-L-glycero-beta-D-manno-heptose biosynthesis; ADP-L-glycero-beta-D-manno-heptose from D-glycero-beta-D-manno-heptose 7-phosphate: step 4/4. Its function is as follows. Catalyzes the interconversion between ADP-D-glycero-beta-D-manno-heptose and ADP-L-glycero-beta-D-manno-heptose via an epimerization at carbon 6 of the heptose. This is ADP-L-glycero-D-manno-heptose-6-epimerase from Shigella boydii serotype 18 (strain CDC 3083-94 / BS512).